A 229-amino-acid polypeptide reads, in one-letter code: Transcriptional activator protein IrlR (229 aa).

Residues 2 to 115 form the Response regulatory domain; the sequence is RILIVEDEPK…ELVARVRSIL (114 aa). A 4-aspartylphosphate modification is found at Asp51. The ompR/PhoB-type DNA-binding region spans 123-221; that stretch reads STVLRIADLE…VRGMGYVLEV (99 aa).

Phosphorylated by IrlS.

Functionally, member of the two-component regulatory system IrlR/IrlS. May be involved in invasion of eukaryotic cells and heavy-metal resistance. The polypeptide is Transcriptional activator protein IrlR (irlR) (Burkholderia pseudomallei (strain 1026b)).